The following is a 131-amino-acid chain: Small ribosomal subunit protein uS9 (131 aa).

It belongs to the universal ribosomal protein uS9 family.

The protein is Small ribosomal subunit protein uS9 of Actinobacillus pleuropneumoniae serotype 7 (strain AP76).